Consider the following 1402-residue polypeptide: DNA-directed RNA polymerase subunit beta' (1402 aa).

Zn(2+) contacts are provided by cysteine 72, cysteine 74, cysteine 87, and cysteine 90. Mg(2+) is bound by residues aspartate 463, aspartate 465, and aspartate 467. Zn(2+)-binding residues include cysteine 811, cysteine 885, cysteine 892, and cysteine 895.

The protein belongs to the RNA polymerase beta' chain family. As to quaternary structure, the RNAP catalytic core consists of 2 alpha, 1 beta, 1 beta' and 1 omega subunit. When a sigma factor is associated with the core the holoenzyme is formed, which can initiate transcription. Mg(2+) serves as cofactor. Zn(2+) is required as a cofactor.

It carries out the reaction RNA(n) + a ribonucleoside 5'-triphosphate = RNA(n+1) + diphosphate. Its function is as follows. DNA-dependent RNA polymerase catalyzes the transcription of DNA into RNA using the four ribonucleoside triphosphates as substrates. This is DNA-directed RNA polymerase subunit beta' from Paracoccus denitrificans (strain Pd 1222).